Reading from the N-terminus, the 586-residue chain is CTP synthase 2 (586 aa).

One can recognise a Glutamine amidotransferase type-1 domain in the interval S300 to H554. Active-site for GATase activity residues include C399, H526, and E528. S568, S571, and S574 each carry phosphoserine.

Belongs to the CTP synthase family.

The catalysed reaction is UTP + L-glutamine + ATP + H2O = CTP + L-glutamate + ADP + phosphate + 2 H(+). The protein operates within pyrimidine metabolism; CTP biosynthesis via de novo pathway; CTP from UDP: step 2/2. Catalyzes the ATP-dependent amination of UTP to CTP with either L-glutamine or ammonia as the source of nitrogen. Constitutes the rate-limiting enzyme in the synthesis of cytosine nucleotides. The chain is CTP synthase 2 (Ctps2) from Rattus norvegicus (Rat).